A 209-amino-acid chain; its full sequence is NADH-ubiquinone oxidoreductase subunit 9 (209 aa).

It belongs to the complex I 30 kDa subunit family. As to quaternary structure, complex I is composed of about 30 different subunits.

The protein resides in the mitochondrion inner membrane. The enzyme catalyses a ubiquinone + NADH + 5 H(+)(in) = a ubiquinol + NAD(+) + 4 H(+)(out). Core subunit of the mitochondrial membrane respiratory chain NADH dehydrogenase (Complex I) that is believed to belong to the minimal assembly required for catalysis. Complex I functions in the transfer of electrons from NADH to the respiratory chain. The immediate electron acceptor for the enzyme is believed to be ubiquinone. The protein is NADH-ubiquinone oxidoreductase subunit 9 (nad9) of Dictyostelium citrinum (Slime mold).